A 212-amino-acid chain; its full sequence is Uracil phosphoribosyltransferase (212 aa).

5-phospho-alpha-D-ribose 1-diphosphate-binding positions include arginine 78, arginine 103, and 130–138 (DPMLATGGS). Uracil is bound by residues isoleucine 193 and 198–200 (GDA). Aspartate 199 is a binding site for 5-phospho-alpha-D-ribose 1-diphosphate.

This sequence belongs to the UPRTase family. Requires Mg(2+) as cofactor.

The catalysed reaction is UMP + diphosphate = 5-phospho-alpha-D-ribose 1-diphosphate + uracil. The protein operates within pyrimidine metabolism; UMP biosynthesis via salvage pathway; UMP from uracil: step 1/1. With respect to regulation, allosterically activated by GTP. Functionally, catalyzes the conversion of uracil and 5-phospho-alpha-D-ribose 1-diphosphate (PRPP) to UMP and diphosphate. The polypeptide is Uracil phosphoribosyltransferase (Pseudomonas putida (strain ATCC 700007 / DSM 6899 / JCM 31910 / BCRC 17059 / LMG 24140 / F1)).